The chain runs to 435 residues: Adenylosuccinate synthetase (435 aa).

Residues 17-23 (GDEGKGK) and 45-47 (GHT) each bind GTP. Residue Asp-18 is the Proton acceptor of the active site. Residues Asp-18 and Gly-45 each coordinate Mg(2+). IMP is bound by residues 18 to 21 (DEGK), 43 to 46 (NAGH), Thr-134, Arg-148, Gln-229, Thr-244, and Arg-308. His-46 acts as the Proton donor in catalysis. 304-310 (SVTGRPR) is a binding site for substrate. Residues Arg-310, 336–338 (KLD), and 418–420 (STG) contribute to the GTP site.

The protein belongs to the adenylosuccinate synthetase family. Homodimer. Mg(2+) serves as cofactor.

The protein localises to the cytoplasm. It carries out the reaction IMP + L-aspartate + GTP = N(6)-(1,2-dicarboxyethyl)-AMP + GDP + phosphate + 2 H(+). It functions in the pathway purine metabolism; AMP biosynthesis via de novo pathway; AMP from IMP: step 1/2. Plays an important role in the de novo pathway of purine nucleotide biosynthesis. Catalyzes the first committed step in the biosynthesis of AMP from IMP. This chain is Adenylosuccinate synthetase, found in Bordetella parapertussis (strain 12822 / ATCC BAA-587 / NCTC 13253).